The chain runs to 419 residues: uncharacterized protein (419 aa).

Transmembrane regions (helical) follow at residues 1-21 (MTTV…FLIL), 24-44 (VSPA…GGAD), 66-86 (ILAA…NSIT), 101-121 (ALAL…VAVI), 174-194 (SVMM…YFLA), 216-236 (NLPS…LLAL), 242-262 (IKVD…FCMG), 280-300 (PVAI…NSGL), 311-331 (SGLP…LATA), 349-369 (LELG…ATVF), and 396-416 (IPYE…IFGV).

The protein belongs to the CitM (TC 2.A.11) transporter family.

The protein resides in the cell membrane. This is an uncharacterized protein from Haemophilus influenzae (strain ATCC 51907 / DSM 11121 / KW20 / Rd).